Reading from the N-terminus, the 432-residue chain is Adenylosuccinate synthetase (432 aa).

GTP is bound by residues 13 to 19 and 41 to 43; these read GDEGKGK and GHT. Catalysis depends on Asp-14, which acts as the Proton acceptor. 2 residues coordinate Mg(2+): Asp-14 and Gly-41. Residues 14–17, 39–42, Thr-130, Arg-144, Gln-225, Thr-240, and Arg-304 contribute to the IMP site; these read DEGK and NAGH. His-42 acts as the Proton donor in catalysis. 300-306 is a binding site for substrate; the sequence is STTGRPR. GTP contacts are provided by residues Arg-306, 332-334, and 416-418; these read KLD and STG.

It belongs to the adenylosuccinate synthetase family. In terms of assembly, homodimer. Requires Mg(2+) as cofactor.

Its subcellular location is the cytoplasm. It carries out the reaction IMP + L-aspartate + GTP = N(6)-(1,2-dicarboxyethyl)-AMP + GDP + phosphate + 2 H(+). It functions in the pathway purine metabolism; AMP biosynthesis via de novo pathway; AMP from IMP: step 1/2. Functionally, plays an important role in the de novo pathway of purine nucleotide biosynthesis. Catalyzes the first committed step in the biosynthesis of AMP from IMP. This chain is Adenylosuccinate synthetase, found in Nitrosomonas eutropha (strain DSM 101675 / C91 / Nm57).